A 194-amino-acid chain; its full sequence is Probable chorismate pyruvate-lyase (194 aa).

The substrate site is built by arginine 77, leucine 115, and glutamate 176.

It belongs to the UbiC family.

The protein resides in the cytoplasm. The catalysed reaction is chorismate = 4-hydroxybenzoate + pyruvate. It functions in the pathway cofactor biosynthesis; ubiquinone biosynthesis. In terms of biological role, removes the pyruvyl group from chorismate, with concomitant aromatization of the ring, to provide 4-hydroxybenzoate (4HB) for the ubiquinone pathway. This Cupriavidus pinatubonensis (strain JMP 134 / LMG 1197) (Cupriavidus necator (strain JMP 134)) protein is Probable chorismate pyruvate-lyase.